The sequence spans 272 residues: Tryptophan synthase alpha chain (272 aa).

Active-site proton acceptor residues include glutamate 53 and aspartate 64.

Belongs to the TrpA family. Tetramer of two alpha and two beta chains.

It catalyses the reaction (1S,2R)-1-C-(indol-3-yl)glycerol 3-phosphate + L-serine = D-glyceraldehyde 3-phosphate + L-tryptophan + H2O. It functions in the pathway amino-acid biosynthesis; L-tryptophan biosynthesis; L-tryptophan from chorismate: step 5/5. Its function is as follows. The alpha subunit is responsible for the aldol cleavage of indoleglycerol phosphate to indole and glyceraldehyde 3-phosphate. The chain is Tryptophan synthase alpha chain from Xanthomonas campestris pv. campestris (strain B100).